The following is a 161-amino-acid chain: D-amino-acid N-acetyltransferase HPA3 (161 aa).

Ser-2 carries the post-translational modification N-acetylserine. Positions 14–161 (IVVKAIEPKD…DKVLYKRNGY (148 aa)) constitute an N-acetyltransferase domain. Residue 98 to 111 (LYVTERARVKGVGR) coordinates acetyl-CoA.

This sequence belongs to the acetyltransferase family. GNAT subfamily. Post-translationally, autoacetylates in an intermolecular reaction.

It is found in the cytoplasm. Its subcellular location is the nucleus. It carries out the reaction a D-alpha-amino acid + acetyl-CoA = an N-acetyl-D-amino acid + CoA + H(+). Functionally, N-acetyltransferase that acts on a wide range of D-amino acids. Catalyzes the N-acetylation through an ordered bi-bi mechanism, in which acetyl-CoA is the first substrate to be bound and CoA is the last product to be liberated. D-amino acids are toxic for the cell and their N-acetylation, preceding removal from cells, plays an important role in detoxification of D-amino acids. In vitro, capable of acetylating histone H4 at 'Lys-8' and polyamines like putrescine, spermidine and spermine. This chain is D-amino-acid N-acetyltransferase HPA3, found in Saccharomyces cerevisiae (strain ATCC 204508 / S288c) (Baker's yeast).